A 398-amino-acid polypeptide reads, in one-letter code: Phosphoglycerate kinase (398 aa).

Substrate is bound by residues 21 to 23 (DFN), arginine 36, 59 to 62 (HLGR), arginine 119, and arginine 157. Residues lysine 208, glycine 296, glutamate 327, and 354–357 (GGDS) contribute to the ATP site.

The protein belongs to the phosphoglycerate kinase family. Monomer.

The protein resides in the cytoplasm. It carries out the reaction (2R)-3-phosphoglycerate + ATP = (2R)-3-phospho-glyceroyl phosphate + ADP. Its pathway is carbohydrate degradation; glycolysis; pyruvate from D-glyceraldehyde 3-phosphate: step 2/5. In Streptococcus mutans serotype c (strain ATCC 700610 / UA159), this protein is Phosphoglycerate kinase.